Consider the following 1376-residue polypeptide: MEATLEQRPFPYLATEANLLTQIKESAADGLFKSFQLLLGKDAREGSVRFEALLGVYTNVVEFVKFLETALAAACVNTEFKDLRRMIDGKIQFKISMPTIAHGDGRRPNKQRQYIVMKACNKHHIGAEIELAAADIELLFAEKETPLDFTEYAGAIKTITSALQFGMDALERGLVDTVLAVKLRHAPPVFILKTLGDPVYSERGLKKAVKSDMVSMFKAHLIEHSFFLDKAELMTRGKQYVLTMLSDMLAAVCEDTVFKGVSTYTTASGQQVAGVLETTDSVMRRLMNLLGQVESAMSGPAAYASYVVRGANLVTAVSYGRAMRNFEQFMARIVDHPNALPSVEGDKAALADGHDEIQRTRIAASLVKIGDKFVAIESLQRMYNETQFPCPLNRRIQYTYFFPVGLHLPVPRYSTSVSVRGVESPAIQSTETWVVNKNNVPLCFGYQNALKSICHPRMHNPTQSAQALNQAFPDPDGGHGYGLRYEQTPNMNLFRTFHQYYMGKNVAFVPDVAQKALVTTEDLLHPTSHRLLRLEVHPFFDFFVHPCPGARGSYRATHRTMVGNIPQPLAPREFQESRGAQFDAVTNMTHVIDQLTIDVIQETAFDPAYPLFCYVIEAMIHGQEEKFVMNMPLIALVIQTYWVNSGKLAFVNSYHMVRFICTHMGNGSIPKEAHGHYRKILGELIALEQALLKLAGHETVGRTPITHLVSALLDPHLLPPFAYHDVFTDLMQKSSRQPIIKIGDQNYDNPQNRATFINLRGRMEDLVNNLVNIYQTRVNEDHDERHVLDVAPLDENDYNPVLEKLFYYVLMPVCSNGHMCGMGVDYQNVALTLTYNGPVFADVVNAQDDILLHLENGTLKDILQAGDIRPTVDMIRVLCTSFLTCPFVTQAARVITKRDPAQSFATHEYGKDVAQTVLVNGFGAFAVADRSREAAETMFYPVPFNKLYADPLVAATLHPLLANYVTRLPNQRNAVVFNVPSNLMAEYEEWHKSPVAAYAASCQATPGAISAMVSMHQKLSAPSFICQAKHRMHPGFAMTVVRTDEVLAEHILYCSRASTSMFVGLPSVVRREVRSDAVTFEITHEIASLHTALGYSSVIAPAHVAAITTDMGVHCQDLFMIFPGDAYQDRQLHDYIKMKAGVQTGSPGNRMDHVGYTAGVPRCENLPGLSHGQLATCEIIPTPVTSDVAYFQTPSNPRGRAACVVSCDAYSNESAERLLYDHSIPDPAYECRSTNNPWASQRGSLGDVLYNITFRQTALPGMYSPCRQFFHKEDIMRYNRGLYTLVNEYSARLAGAPATSTTDLQYVVVNGTDVFLDQPCHMLQEAYPTLAASHRVMLDEYMSNKQTHAPVHMGQYLIEEVAPMKRLLKLGNKVVY.

It belongs to the herpesviridae major capsid protein family. Homomultimer. Makes the hexons and eleven out of twelve pentons. Interacts with triplex proteins 1/TRX1 and 2/TRX2; adjacent capsomers are linked together in groups of three by triplexes, heterotrimeric complexes composed of one molecule of TRX1 and two molecules of TRX2. Interacts with scaffold protein; this interaction allows efficient MCP transport to the host nucleus. Interacts with capsid vertex component 2/CVC2. Interacts with the small capsomere-interacting protein/SCP.

The protein resides in the virion. Its subcellular location is the host nucleus. Functionally, self-assembles to form an icosahedral capsid with a T=16 symmetry, about 200 nm in diameter, and consisting of 150 hexons and 12 pentons (total of 162 capsomers). Hexons form the edges and faces of the capsid and are each composed of six MCP molecules. In contrast, one penton is found at each of the 12 vertices. Eleven of the pentons are MCP pentamers, while the last vertex is occupied by the portal complex. The capsid is surrounded by a layer of proteinaceous material designated the tegument which, in turn, is enclosed in an envelope of host cell-derived lipids containing virus-encoded glycoproteins. The chain is Major capsid protein from Human herpesvirus 8 type P (isolate GK18) (HHV-8).